The chain runs to 867 residues: Cilium assembly protein DZIP1 (867 aa).

The interval 12–203 (MPFQKHVYYP…KANYYQCHFC (192 aa)) is mediates interaction with PCM1. A mediates interaction with GLI3 and localization to the cilium basal body region spans residues 12–367 (MPFQKHVYYP…QDFHNVMQLL (356 aa)). The required for interaction with DAZ1 stretch occupies residues 154 to 278 (CDGEQSKKLL…SKEYEMQKTK (125 aa)). The C2H2-type zinc-finger motif lies at 198-221 (YQCHFCDKAFMNQAFLQSHIQRRH). S226 is subject to Phosphoserine; by PLK1. 3 coiled-coil regions span residues 230 to 340 (YQKN…KSNI), 401 to 445 (TSMI…FTCN), and 568 to 588 (DQLH…EREI). A mediates interaction with GDI2 and RAB8A region spans residues 446–617 (PLNSISEPKG…EKALLSSDQC (172 aa)). Polar residues-rich tracts occupy residues 643–654 (LIRQKAVSTDRT), 671–680 (KSSTITTPPF), and 708–718 (NKGSFGKNTVK). Disordered stretches follow at residues 643 to 768 (LIRQ…GGTN) and 796 to 867 (SLEE…TSDV). The span at 722–733 (DGTEGSEIEDTD) shows a compositional bias: acidic residues. A compositionally biased stretch (basic and acidic residues) spans 807-823 (SGKEQKEPPPAKNEPHF). Low complexity predominate over residues 848 to 859 (SSTLKSSLVTVT).

Belongs to the DZIP C2H2-type zinc-finger protein family. Interacts with DAZ1. Interacts with the BBSome; recruits the BBSome to centriolar satellites of the cilium. Interacts with PCM1; localizes DZIP1 and the associated BBSome to centriolar satellites. Interacts with RAB8A (GDP-bound inactive form); recruits RAB8A to the basal body of the cilium and prevents its inhibition by GDI2. Interacts with GDI2; negatively regulates the interaction of GDI2 with GDP-bound RAB8A. Interacts with GLI3; retains GLI3 within the cytoplasm. Interacts with CEP164. Interacts with IFT88. Post-translationally, phosphorylation at Ser-226 by PLK1 before mitosis prevents interaction with PCM1 and localization to centriolar satellites. Thereby, it negatively regulates the localization of the BBSome to centriolar satellites. In terms of tissue distribution, predominantly expressed in testis (at protein level). Also expressed in fetal brain, adult oocytes and ovary. Expressed in undifferentiated ES cells. In testis, it is specifically expressed in germ cells (at protein level). Expressed in mature germ cells and secondary spermatocytes, while it is weakly or not expressed in primary spermatocytes.

Its subcellular location is the cytoplasm. It localises to the cytoskeleton. The protein localises to the cilium basal body. The protein resides in the microtubule organizing center. It is found in the centrosome. Its subcellular location is the centriolar satellite. It localises to the centriole. The protein localises to the nucleus. The protein resides in the nucleus speckle. Molecular adapter that recruits protein complexes required for cilium assembly and function to the cilium basal body. At the exit of mitosis, localizes to the basal body and ciliary base of the forming primary cilium where it recruits and activates RAB8A to direct vesicle-mediated transport of proteins to the cilium. Also recruits the BBSome, a complex involved in cilium biogenesis, by bridging it to PCM1 at the centriolar satellites of the cilium. It is also required for the recruitment to the cilium basal body of the intraflagellar transport (IFT) machinery as well as the ciliary appendage proteins CEP164 and NINEIN. Functions as a regulator of Hedgehog signaling both through its role in cilium assembly but also probably through its ability to retain GLI3 within the cytoplasm. It is involved in spermatogenesis through its role in organization of the basal body and assembly of the sperm flagellum. Also indirectly involved in heart development through its function in ciliogenesis. In Homo sapiens (Human), this protein is Cilium assembly protein DZIP1.